A 320-amino-acid chain; its full sequence is NAC domain-containing protein 20 (320 aa).

The 157-residue stretch at 14–170 (LPPGFRFHPT…DWAVCRIFHK (157 aa)) folds into the NAC domain. The DNA-binding element occupies 114-176 (IGMKKTLVFY…IFHKSSGIKK (63 aa)).

As to quaternary structure, forms homodimers. Forms heterodimers with NAC26. Expressed in developing seeds. Expressed in developing endosperm.

It is found in the nucleus. Its subcellular location is the endoplasmic reticulum. In terms of biological role, transcription factor that acts redundantly with NAC26 to regulate the expression of genes involved in the biosynthesis of starch and storage proteins in grain. Directly binds to the promoters of starch synthase 1 (SS1), pullulanase (PUL), glutelin A1 (GLUA1), glutelins B4 and B5 (GLUB4 and GLUB5), alpha-globulin and 16 kDa prolamin, and activates their expression. This chain is NAC domain-containing protein 20, found in Oryza sativa subsp. japonica (Rice).